The chain runs to 394 residues: Acetyl-CoA acetyltransferase (394 aa).

Catalysis depends on C89, which acts as the Acyl-thioester intermediate. Active-site proton acceptor residues include H350 and C380.

The protein belongs to the thiolase-like superfamily. Thiolase family. As to quaternary structure, homotetramer.

Its subcellular location is the cytoplasm. The catalysed reaction is 2 acetyl-CoA = acetoacetyl-CoA + CoA. The protein operates within biopolymer metabolism; poly-(R)-3-hydroxybutanoate biosynthesis. Its pathway is metabolic intermediate biosynthesis; (R)-mevalonate biosynthesis; (R)-mevalonate from acetyl-CoA: step 1/3. In Allochromatium vinosum (strain ATCC 17899 / DSM 180 / NBRC 103801 / NCIMB 10441 / D) (Chromatium vinosum), this protein is Acetyl-CoA acetyltransferase.